Here is a 331-residue protein sequence, read N- to C-terminus: Serine racemase (331 aa).

2 residues coordinate ATP: serine 34 and lysine 54. The active-site Proton acceptor is lysine 59. Lysine 59 bears the N6-(pyridoxal phosphate)lysine mark. Position 81 (threonine 81) interacts with Ca(2+). Serine 84 serves as the catalytic Proton acceptor. Asparagine 86 provides a ligand contact to pyridoxal 5'-phosphate. Tyrosine 121 contributes to the ATP binding site. Aspartate 178 serves as a coordination point for Mg(2+). Residues glycine 186, glycine 187, and glycine 188 each coordinate pyridoxal 5'-phosphate. Ca(2+) is bound by residues glutamate 210, alanine 214, and aspartate 216. Mg(2+)-binding residues include glutamate 210, alanine 214, and aspartate 216. Positions 210, 214, and 216 each coordinate Mn(2+). Lysine 278 provides a ligand contact to ATP. Serine 314 contributes to the pyridoxal 5'-phosphate binding site. Position 317 (asparagine 317) interacts with ATP.

It belongs to the serine/threonine dehydratase family. As to quaternary structure, homodimer. Requires Mg(2+) as cofactor. It depends on Mn(2+) as a cofactor. Ca(2+) serves as cofactor. Pyridoxal 5'-phosphate is required as a cofactor. Expressed in the whole plant.

It carries out the reaction L-serine = D-serine. It catalyses the reaction L-serine = pyruvate + NH4(+). The enzyme catalyses D-serine = pyruvate + NH4(+). Its activity is regulated as follows. Inhibited by hydroxylamine. Racemase activity is enhanced by Ca(2+), Mg(2+), Mn(2+), and is decreased by Ni(2+), Zn(2+). Hydratase activity is enhanced by Ca(2+), Mg(2+), Mn(2+), Cu(2+), Fe(2+), Ni(2+). Catalyzes the synthesis of D-serine from L-serine. Has dehydratase activity towards both L-serine and D-serine. Displays high substrate specificity for L-serine, whereas L-alanine, L-arginine, and L-glutamine were poor substrates. This is Serine racemase (SR) from Arabidopsis thaliana (Mouse-ear cress).